The sequence spans 185 residues: Photosystem I assembly protein Ycf4 (185 aa).

2 consecutive transmembrane segments (helical) span residues 24–44 and 66–86; these read YIIG…SISS and IIMG…WYMV.

It belongs to the Ycf4 family.

The protein localises to the cellular thylakoid membrane. Functionally, seems to be required for the assembly of the photosystem I complex. The sequence is that of Photosystem I assembly protein Ycf4 from Prochlorococcus marinus (strain MIT 9312).